Consider the following 360-residue polypeptide: Peptide chain release factor 1 (360 aa).

At Q234 the chain carries N5-methylglutamine.

The protein belongs to the prokaryotic/mitochondrial release factor family. Post-translationally, methylated by PrmC. Methylation increases the termination efficiency of RF1.

The protein localises to the cytoplasm. Functionally, peptide chain release factor 1 directs the termination of translation in response to the peptide chain termination codons UAG and UAA. The polypeptide is Peptide chain release factor 1 (Renibacterium salmoninarum (strain ATCC 33209 / DSM 20767 / JCM 11484 / NBRC 15589 / NCIMB 2235)).